Consider the following 529-residue polypeptide: Peptide chain release factor 3 (529 aa).

A tr-type G domain is found at alanine 11–methionine 280. GTP-binding positions include serine 20–threonine 27, aspartate 88–histidine 92, and asparagine 142–aspartate 145.

It belongs to the TRAFAC class translation factor GTPase superfamily. Classic translation factor GTPase family. PrfC subfamily.

The protein localises to the cytoplasm. In terms of biological role, increases the formation of ribosomal termination complexes and stimulates activities of RF-1 and RF-2. It binds guanine nucleotides and has strong preference for UGA stop codons. It may interact directly with the ribosome. The stimulation of RF-1 and RF-2 is significantly reduced by GTP and GDP, but not by GMP. The chain is Peptide chain release factor 3 from Salmonella gallinarum (strain 287/91 / NCTC 13346).